A 203-amino-acid polypeptide reads, in one-letter code: Guanylate kinase (203 aa).

One can recognise a Guanylate kinase-like domain in the interval 5–184 (GMLIVLSGPS…AVQRIEKIIE (180 aa)). 12–19 (GPSGVGKG) is an ATP binding site.

It belongs to the guanylate kinase family.

The protein resides in the cytoplasm. The enzyme catalyses GMP + ATP = GDP + ADP. In terms of biological role, essential for recycling GMP and indirectly, cGMP. This chain is Guanylate kinase, found in Latilactobacillus sakei subsp. sakei (strain 23K) (Lactobacillus sakei subsp. sakei).